The sequence spans 24 residues: 29 kDa outer membrane protein (24 aa).

It localises to the cell outer membrane. Its function is as follows. May be involved in transporting molecules across the outer membrane. This chain is 29 kDa outer membrane protein, found in Acinetobacter baumannii.